Here is a 224-residue protein sequence, read N- to C-terminus: Ras-related protein Rab-11C (224 aa).

17–24 (GDSAVGKS) contributes to the GTP binding site. The Effector region motif lies at 39 to 47 (TKATIGVDF). GTP-binding positions include 65–69 (DTAGQ) and 123–126 (NKSD). The interval 194-224 (QGKKLTPLSDPAPQLTANTTSTHQEKKSGCC) is disordered. S-geranylgeranyl cysteine attachment occurs at residues cysteine 223 and cysteine 224.

This sequence belongs to the small GTPase superfamily. Rab family.

It localises to the membrane. The polypeptide is Ras-related protein Rab-11C (rab11C) (Dictyostelium discoideum (Social amoeba)).